The chain runs to 249 residues: Uridylate kinase (249 aa).

An ATP-binding site is contributed by 15 to 18 (KLSG). Residues 23–28 (GDEGFG) are involved in allosteric activation by GTP. Gly-57 serves as a coordination point for UMP. ATP-binding residues include Gly-58 and Arg-62. Residues Asp-77 and 138-145 (TGNPFFTT) each bind UMP. 3 residues coordinate ATP: Thr-165, Tyr-171, and Asp-174.

This sequence belongs to the UMP kinase family. Homohexamer.

The protein resides in the cytoplasm. The catalysed reaction is UMP + ATP = UDP + ADP. It participates in pyrimidine metabolism; CTP biosynthesis via de novo pathway; UDP from UMP (UMPK route): step 1/1. Allosterically activated by GTP. Inhibited by UTP. Functionally, catalyzes the reversible phosphorylation of UMP to UDP. This Pseudoalteromonas translucida (strain TAC 125) protein is Uridylate kinase.